The primary structure comprises 206 residues: Putative cryptic phosphonate transport system permease protein PhnE1 (206 aa).

3 consecutive transmembrane segments (helical) span residues 30-50 (WFSL…WQGA), 92-112 (IAVW…LMSA), and 137-157 (MVFA…GVLA).

If the reading frame is restored, the complex is composed of two ATP-binding proteins (PhnC), two transmembrane proteins (PhnE) and a solute-binding protein (PhnD).

The protein resides in the cell inner membrane. In terms of biological role, N-terminal fragment of the PhnE protein, part of a phosphonate usage operon that is cryptic in K12 strains. Growth of K12 strains on phosphonate can be observed when it is used as the sole phosphorus source after a 60 hour lag period, suggesting the operon is activated. An intact PhnE in strain B is (AC A0A140NFA3). Part of the binding-protein-dependent transport system for phosphonates; probably responsible for the translocation of the substrate across the membrane. The protein is Putative cryptic phosphonate transport system permease protein PhnE1 (phnE1) of Escherichia coli (strain K12).